The primary structure comprises 98 residues: NADH-ubiquinone oxidoreductase chain 4L (98 aa).

The next 3 membrane-spanning stretches (helical) occupy residues 2-22 (PSIS…MLMF), 29-49 (SLLC…LIIL), and 61-81 (ILLL…LVTV).

It belongs to the complex I subunit 4L family. Core subunit of respiratory chain NADH dehydrogenase (Complex I) which is composed of 45 different subunits.

The protein localises to the mitochondrion inner membrane. The enzyme catalyses a ubiquinone + NADH + 5 H(+)(in) = a ubiquinol + NAD(+) + 4 H(+)(out). Its function is as follows. Core subunit of the mitochondrial membrane respiratory chain NADH dehydrogenase (Complex I) which catalyzes electron transfer from NADH through the respiratory chain, using ubiquinone as an electron acceptor. Part of the enzyme membrane arm which is embedded in the lipid bilayer and involved in proton translocation. The sequence is that of NADH-ubiquinone oxidoreductase chain 4L (MT-ND4L) from Microcebus mamiratra (Claire's mouse lemur).